We begin with the raw amino-acid sequence, 319 residues long: Pantothenate kinase (319 aa).

96–103 (GSVAVGKS) lines the ATP pocket.

Belongs to the prokaryotic pantothenate kinase family.

Its subcellular location is the cytoplasm. It catalyses the reaction (R)-pantothenate + ATP = (R)-4'-phosphopantothenate + ADP + H(+). It participates in cofactor biosynthesis; coenzyme A biosynthesis; CoA from (R)-pantothenate: step 1/5. This chain is Pantothenate kinase (coaA), found in Bacillus subtilis (strain 168).